We begin with the raw amino-acid sequence, 96 residues long: Large ribosomal subunit protein bL28 (96 aa).

This sequence belongs to the bacterial ribosomal protein bL28 family.

The chain is Large ribosomal subunit protein bL28 from Orientia tsutsugamushi (strain Boryong) (Rickettsia tsutsugamushi).